The following is a 605-amino-acid chain: Protein DENND6A (605 aa).

A disordered region spans residues 1–20 (MALPGPAVFGPGSRGSLDEA). Positions 60 to 239 (HCVCVVGFDL…KVRIPTCHDK (180 aa)) constitute a uDENN domain. The residue at position 124 (Ser124) is a Phosphoserine. The 126-residue stretch at 265-390 (EVDLFRCFCP…VKVKKLKNLK (126 aa)) folds into the cDENN domain. One can recognise a dDENN domain in the interval 392-525 (LDSKPGVYTS…KTRRKEMTQK (134 aa)). Position 507 is an N6-methyllysine (Lys507).

This sequence belongs to the DENND6 family.

Its subcellular location is the recycling endosome. It localises to the cytoplasm. Its function is as follows. Guanine nucleotide exchange factor (GEF) for RAB14. Component of an endocytic recycling pathway that is required for the control of ADAM10 transport, shedding of N-cadherin/CDH2 by ADAM9 or ADAM10 and regulation of cell-cell junctions. Required for RAB14 recruitment to recycling endosomes. This chain is Protein DENND6A (Dennd6a), found in Mus musculus (Mouse).